The chain runs to 431 residues: Glutamate-1-semialdehyde 2,1-aminomutase (431 aa).

Lys265 carries the post-translational modification N6-(pyridoxal phosphate)lysine.

This sequence belongs to the class-III pyridoxal-phosphate-dependent aminotransferase family. HemL subfamily. In terms of assembly, homodimer. Pyridoxal 5'-phosphate is required as a cofactor.

The protein resides in the cytoplasm. The catalysed reaction is (S)-4-amino-5-oxopentanoate = 5-aminolevulinate. The protein operates within porphyrin-containing compound metabolism; protoporphyrin-IX biosynthesis; 5-aminolevulinate from L-glutamyl-tRNA(Glu): step 2/2. The chain is Glutamate-1-semialdehyde 2,1-aminomutase from Vibrio atlanticus (strain LGP32) (Vibrio splendidus (strain Mel32)).